The sequence spans 858 residues: Putative glutamate--cysteine ligase 2-3 (858 aa).

The tract at residues 1–372 (MSDARNVAVG…RDVPPAGASL (372 aa)) is carboxylate-amine ligase. The tract at residues 373 to 858 (GVAPAVSAPD…GSKDTWIPRR (486 aa)) is unknown.

It in the N-terminal section; belongs to the glutamate--cysteine ligase type 2 family. YbdK subfamily.

It catalyses the reaction L-cysteine + L-glutamate + ATP = gamma-L-glutamyl-L-cysteine + ADP + phosphate + H(+). In terms of biological role, ATP-dependent carboxylate-amine ligase which exhibits weak glutamate--cysteine ligase activity. The protein is Putative glutamate--cysteine ligase 2-3 of Frankia alni (strain DSM 45986 / CECT 9034 / ACN14a).